The chain runs to 142 residues: Large ribosomal subunit protein uL13 (142 aa).

This sequence belongs to the universal ribosomal protein uL13 family. As to quaternary structure, part of the 50S ribosomal subunit.

Its function is as follows. This protein is one of the early assembly proteins of the 50S ribosomal subunit, although it is not seen to bind rRNA by itself. It is important during the early stages of 50S assembly. In Chromohalobacter salexigens (strain ATCC BAA-138 / DSM 3043 / CIP 106854 / NCIMB 13768 / 1H11), this protein is Large ribosomal subunit protein uL13.